A 579-amino-acid polypeptide reads, in one-letter code: Pre-mRNA-processing factor 17 (579 aa).

The segment covering 1–19 (MSAAIAALAASYGSGSGSE) has biased composition (low complexity). Disordered stretches follow at residues 1-47 (MSAA…PSSK) and 204-237 (DVAK…PGEE). The residue at position 46 (serine 46) is a Phosphoserine. 7 WD repeats span residues 286 to 326 (GHTK…RCLR), 330 to 369 (GHSK…CISR), 371 to 413 (TNRK…IVQE), 416 to 455 (RHLG…DFKY), 459 to 498 (PSMH…RLNK), 504 to 545 (GHMV…LYSR), and 548 to 578 (AHDK…IKLW).

Component of the pre-catalytic and catalytic spliceosome complexes. Component of the postcatalytic spliceosome P complex. Interacts with PPIL1; this interaction leads to CDC40 isomerization. In terms of processing, undergoes isomerization of the peptide bond between Gly-94 and Pro-95. The reaction is catalyzed by PPIL1.

Its subcellular location is the nucleus. It is found in the nucleus speckle. Functionally, required for pre-mRNA splicing as component of the activated spliceosome. Plays an important role in embryonic brain development; this function does not require proline isomerization. The sequence is that of Pre-mRNA-processing factor 17 (CDC40) from Homo sapiens (Human).